We begin with the raw amino-acid sequence, 362 residues long: tRNA N6-adenosine threonylcarbamoyltransferase (362 aa).

Residues H116 and H120 each coordinate Fe cation. Residues 138-142, D171, G184, and N284 contribute to the substrate site; that span reads LVSGG. Residue D312 coordinates Fe cation.

Belongs to the KAE1 / TsaD family. It depends on Fe(2+) as a cofactor.

Its subcellular location is the cytoplasm. The catalysed reaction is L-threonylcarbamoyladenylate + adenosine(37) in tRNA = N(6)-L-threonylcarbamoyladenosine(37) in tRNA + AMP + H(+). Its function is as follows. Required for the formation of a threonylcarbamoyl group on adenosine at position 37 (t(6)A37) in tRNAs that read codons beginning with adenine. Is involved in the transfer of the threonylcarbamoyl moiety of threonylcarbamoyl-AMP (TC-AMP) to the N6 group of A37, together with TsaE and TsaB. TsaD likely plays a direct catalytic role in this reaction. This Chelativorans sp. (strain BNC1) protein is tRNA N6-adenosine threonylcarbamoyltransferase.